A 174-amino-acid polypeptide reads, in one-letter code: MVYHSQFNDESAGFRLVGNVPILPLKTTHKGPAPKGDANSVDIIDEALDLFKANILFRNFEVQGNGDRVLIYLTLYITKCLLKIAPMNKADAEKALFLIAQEQFSIPGESAFPLGGLVTVPNTRDAADTLRQYFTQLRLELGVRLCQRVYAVDPSKANKWWICFSKRKFLNKAL.

It belongs to the ARPC3 family. Component of the Arp2/3 complex composed of arpB/Arp2, arpC/Arp3, arcA/p41-arc, arcB/p34-arc, arcC/p21-arc, arcD/p20-arc and arcE/p16-arc. Interacts with carmil (via the region between the LRR domain and COOH-terminal proline-rich domain); carmil is required for Arp2/3-dependent actin nucleation. Arp2/3 complex, MyoB, MyoC, and the alpha and beta subunits of capping protein all form a larger complex with carmil.

Its subcellular location is the cytoplasm. It localises to the cytoskeleton. The protein resides in the cytosol. It is found in the cell cortex. The protein localises to the cell projection. Its subcellular location is the pseudopodium. Functionally, functions as a component of the Arp2/3 complex which is involved in regulation of actin polymerization and together with an activating nucleation-promoting factor (NPF) mediates the formation of branched actin networks. Seems to contact the pointed end of the daughter actin filament. The Arp2/3 complex is involved in organizing the actin system in cell motility and chemotaxis, in phagocytosis and macropinocytosis, at late steps of endosome processing, and in mitosis. In concert with a group of other proteins, the Arp2/3 complex plays a general role in the rapid activation and adaptation of the actin system to its multiple functions. The chain is Actin-related protein 2/3 complex subunit 3 (arcC) from Dictyostelium discoideum (Social amoeba).